A 218-amino-acid polypeptide reads, in one-letter code: Cytidylate kinase (218 aa).

Residue 7–15 (GPSASGKSS) coordinates ATP.

It belongs to the cytidylate kinase family. Type 1 subfamily.

The protein resides in the cytoplasm. The enzyme catalyses CMP + ATP = CDP + ADP. It carries out the reaction dCMP + ATP = dCDP + ADP. This is Cytidylate kinase from Borrelia hermsii (strain HS1 / DAH).